Reading from the N-terminus, the 350-residue chain is D-alanine--D-alanine ligase (350 aa).

The ATP-grasp domain occupies 135 to 335 (KLYAKNLGVK…LAQSLPKTPK (201 aa)). 164 to 219 (KPSFNFPFIVKPNNAGSSLGVSVVKEEKELAYALDGAFEYSKEVLIEPFIQRVKEY) contributes to the ATP binding site. Mg(2+) is bound by residues aspartate 291, glutamate 303, and asparagine 305.

It belongs to the D-alanine--D-alanine ligase family. Mg(2+) is required as a cofactor. Requires Mn(2+) as cofactor.

The protein resides in the cytoplasm. The enzyme catalyses 2 D-alanine + ATP = D-alanyl-D-alanine + ADP + phosphate + H(+). It functions in the pathway cell wall biogenesis; peptidoglycan biosynthesis. Functionally, cell wall formation. The chain is D-alanine--D-alanine ligase from Helicobacter acinonychis (strain Sheeba).